The following is a 491-amino-acid chain: 3-epi-6-deoxocathasterone 23-monooxygenase CYP90D1 (491 aa).

Residues 7–27 form a helical membrane-spanning segment; the sequence is LLFFSFFFFIIIVIFNKINGL. Residue C442 participates in heme binding.

Belongs to the cytochrome P450 family. It depends on heme as a cofactor. As to expression, expressed in leaf vascular tissue.

The protein resides in the endoplasmic reticulum membrane. It catalyses the reaction 3-epi-6-deoxocathasterone + reduced [NADPH--hemoprotein reductase] + O2 = 6-deoxotyphasterol + oxidized [NADPH--hemoprotein reductase] + H2O + H(+). It carries out the reaction (22S,24R)-22-hydroxy-5alpha-ergostan-3-one + reduced [NADPH--hemoprotein reductase] + O2 = 3-dehydro-6-deoxoteasterone + oxidized [NADPH--hemoprotein reductase] + H2O + H(+). It participates in plant hormone biosynthesis; brassinosteroid biosynthesis. Involved in brassinosteroid (BR) biosynthesis. May convert teasterone (TE) to 3-dehydroteasterone (3DT, 3-DHT), or 6-deoxoteasterone (6-deoxoTE) to 3-dehydro-6-deoxoteasterone (6-deoxo3DT, 6-deoxo3DHT). C-23 hydroxylase that converts directly (22S,24R)-22-hydroxy-5-alpha-ergostan-3-one and 3-epi-6-deoxocathasterone to 3-dehydro-6-deoxoteasterone (6-deoxo3DT, 6-deoxo3DHT) and 6-deoxotyphasterol (6-deoxoTY), respectively. These C-23 hydroxylation shortcuts bypass campestanol, 6-deoxocathasterone, and 6-deoxoteasterone (6-deoxoTE). Also catalyzes the conversion of cathasterone to teasterone (TE), 6-deoxotyphasterol (6-deoxoTY) to 6-deoxocathasterone (6-deoxoCT), (22S,24R)-22-hydroxyergost-4-en-3-one (22-OH-4-en-3-one) to (22R,23R)-22,23-dihydroxy-campest-4-en-3-one (22,23-diOH-4-en-3-one) and (22S)-22-hydroxycampesterol (22-OHCR) to (22R,23R)-22,23-dihydroxycampesterol (22,23-diOHCR). The protein is 3-epi-6-deoxocathasterone 23-monooxygenase CYP90D1 of Arabidopsis thaliana (Mouse-ear cress).